A 371-amino-acid chain; its full sequence is Alanine racemase (371 aa).

The Proton acceptor; specific for D-alanine role is filled by Lys-40. The residue at position 40 (Lys-40) is an N6-(pyridoxal phosphate)lysine. Arg-138 contributes to the substrate binding site. Tyr-267 acts as the Proton acceptor; specific for L-alanine in catalysis. Met-314 is a binding site for substrate.

This sequence belongs to the alanine racemase family. Pyridoxal 5'-phosphate is required as a cofactor.

It catalyses the reaction L-alanine = D-alanine. It participates in amino-acid biosynthesis; D-alanine biosynthesis; D-alanine from L-alanine: step 1/1. Catalyzes the interconversion of L-alanine and D-alanine. May also act on other amino acids. The sequence is that of Alanine racemase (alr) from Ligilactobacillus salivarius (strain UCC118) (Lactobacillus salivarius).